The primary structure comprises 134 residues: ATP synthase epsilon chain, plastid (134 aa).

The protein belongs to the ATPase epsilon chain family. In terms of assembly, F-type ATPases have 2 components, CF(1) - the catalytic core - and CF(0) - the membrane proton channel. CF(1) has five subunits: alpha(3), beta(3), gamma(1), delta(1), epsilon(1). CF(0) has three main subunits: a, b and c.

The protein resides in the plastid membrane. Produces ATP from ADP in the presence of a proton gradient across the membrane. The sequence is that of ATP synthase epsilon chain, plastid from Prototheca wickerhamii.